The primary structure comprises 435 residues: uncharacterized protein (435 aa).

The 52-residue stretch at 7 to 58 (PFPITKLPLVPRCKILKFFDYGDLLDISLCSKRMAQTVRDIHITADLHYLTL) folds into the F-box domain.

This is an uncharacterized protein from Caenorhabditis elegans.